The following is a 239-amino-acid chain: Small ribosomal subunit protein eS4 (239 aa).

One can recognise an S4 RNA-binding domain in the interval 37-99 (IPLAVVIRDY…ADLYFRVIPD (63 aa)).

It belongs to the eukaryotic ribosomal protein eS4 family.

The chain is Small ribosomal subunit protein eS4 from Saccharolobus islandicus (strain Y.N.15.51 / Yellowstone #2) (Sulfolobus islandicus).